The chain runs to 414 residues: Transmembrane protein 184A (414 aa).

Positions 1-32 (MTDTPGLLGTPLAWTPPARPAGPQMERAGNGS) are disordered. The next 7 membrane-spanning stretches (helical) occupy residues 48–68 (VSGV…YLHL), 83–103 (LLFI…LLGG), 120–140 (FVIY…SAIM), 177–197 (LQFC…QAFG), 211–231 (LYIT…LFLF), 248–268 (FLTI…LAIL), and 290–310 (VAAG…SIAL). Disordered regions lie at residues 323–342 (TESS…GLKE) and 364–414 (YTQQ…AEEL). Over residues 379 to 388 (SVPSPRTPTH) the composition is skewed to polar residues.

This sequence belongs to the TMEM184 family. In terms of tissue distribution, expressed in vascular cells (at protein level).

The protein localises to the cell membrane. It localises to the cytoplasm. Its subcellular location is the perinuclear region. It is found in the cytoplasmic vesicle membrane. The protein resides in the early endosome membrane. The protein localises to the endosome. It localises to the cytoplasmic vesicle. Its subcellular location is the secretory vesicle membrane. Functionally, acts as a heparin receptor in vascular cells. May be involved in vesicle transport in exocrine cells and Sertoli cells. This Bos taurus (Bovine) protein is Transmembrane protein 184A (TMEM184A).